Reading from the N-terminus, the 783-residue chain is Endonuclease MutS2 (783 aa).

Residue 328 to 335 participates in ATP binding; sequence GPNTGGKT. Positions 708–783 constitute a Smr domain; it reads LDLRGKRYEE…GSGCTIATLG (76 aa).

This sequence belongs to the DNA mismatch repair MutS family. MutS2 subfamily. Homodimer. Binds to stalled ribosomes, contacting rRNA.

In terms of biological role, endonuclease that is involved in the suppression of homologous recombination and thus may have a key role in the control of bacterial genetic diversity. Functionally, acts as a ribosome collision sensor, splitting the ribosome into its 2 subunits. Detects stalled/collided 70S ribosomes which it binds and splits by an ATP-hydrolysis driven conformational change. Acts upstream of the ribosome quality control system (RQC), a ribosome-associated complex that mediates the extraction of incompletely synthesized nascent chains from stalled ribosomes and their subsequent degradation. Probably generates substrates for RQC. The sequence is that of Endonuclease MutS2 from Streptococcus thermophilus (strain ATCC BAA-250 / LMG 18311).